The sequence spans 399 residues: 1-deoxy-D-xylulose 5-phosphate reductoisomerase (399 aa).

The NADPH site is built by Thr-13, Gly-14, Ser-15, Ile-16, and Asn-127. Lys-128 contributes to the 1-deoxy-D-xylulose 5-phosphate binding site. Residue Glu-129 coordinates NADPH. Asp-153 provides a ligand contact to Mn(2+). 4 residues coordinate 1-deoxy-D-xylulose 5-phosphate: Ser-154, Glu-155, Ser-187, and His-210. Mn(2+) is bound at residue Glu-155. Gly-216 contacts NADPH. Residues Ser-223, Asn-228, Lys-229, and Glu-232 each contribute to the 1-deoxy-D-xylulose 5-phosphate site. Glu-232 lines the Mn(2+) pocket.

It belongs to the DXR family. Mg(2+) is required as a cofactor. The cofactor is Mn(2+).

The enzyme catalyses 2-C-methyl-D-erythritol 4-phosphate + NADP(+) = 1-deoxy-D-xylulose 5-phosphate + NADPH + H(+). It functions in the pathway isoprenoid biosynthesis; isopentenyl diphosphate biosynthesis via DXP pathway; isopentenyl diphosphate from 1-deoxy-D-xylulose 5-phosphate: step 1/6. Its function is as follows. Catalyzes the NADPH-dependent rearrangement and reduction of 1-deoxy-D-xylulose-5-phosphate (DXP) to 2-C-methyl-D-erythritol 4-phosphate (MEP). The chain is 1-deoxy-D-xylulose 5-phosphate reductoisomerase from Bordetella petrii (strain ATCC BAA-461 / DSM 12804 / CCUG 43448).